The primary structure comprises 92 residues: MGRSATIAMVPKRRDAMNRHSGPILSSGFIASSSNSCPANSLRMPSALAAETLSFDDRAVRRSTHHPGGGYPQKHAINLQSGLCPAYANASR.

This is an uncharacterized protein from Mycobacterium tuberculosis (strain CDC 1551 / Oshkosh).